Reading from the N-terminus, the 115-residue chain is T cell receptor delta variable 1 (115 aa).

The first 21 residues, 1–21 (MLFSSLLCVFVAFSYSGSSVA), serve as a signal peptide directing secretion. Residues 22–115 (QKVTQAQSSV…SAKYFCALGE (94 aa)) form the Ig-like domain. Cysteines 43 and 111 form a disulfide.

In terms of assembly, gamma-delta TR is a heterodimer composed of a gamma and delta chain; disulfide-linked. The gamma-delta TR is associated with the transmembrane signaling CD3 coreceptor proteins following the stoichiometry: a single gamma-delta TR heterodimer associates with one CD3D-CD3E heterodimer, one CD3G-CD3E heterodimer and one CD247 homodimer forming a stable octameric structure. Upon activation, gamma-delta TR complex associates with FCER1G to initiate intracellular signaling.

The protein resides in the cell membrane. V region of the variable domain of T cell receptor (TR) delta chain that participates in the antigen recognition. Gamma-delta TRs recognize a variety of self and foreign non-peptide antigens frequently expressed at the epithelial boundaries between the host and external environment, including endogenous lipids presented by MH-like protein CD1D and phosphoantigens presented by butyrophilin-like molecule BTN3A1. Upon antigen recognition induces rapid, innate-like immune responses involved in pathogen clearance and tissue repair. Binding of gamma-delta TR complex to antigen triggers phosphorylation of immunoreceptor tyrosine-based activation motifs (ITAMs) in the CD3 chains by the LCK and FYN kinases, allowing the recruitment, phosphorylation, and activation of ZAP70 that facilitates phosphorylation of the scaffolding proteins LCP2 and LAT. This lead to the formation of a supramolecular signalosome that recruits the phospholipase PLCG1, resulting in calcium mobilization and ERK activation, ultimately leading to T cell expansion and differentiation into effector cells. Gamma-delta TRs are produced through somatic rearrangement of a limited repertoire of variable (V), diversity (D), and joining (J) genes. The potential diversity of gamma-delta TRs is conferred by the unique ability to rearrange (D) genes in tandem and to utilize all three reading frames. The combinatorial diversity is considerably increased by the sequence exonuclease trimming and random nucleotide (N) region additions which occur during the V-(D)-J rearrangements. The polypeptide is T cell receptor delta variable 1 (Homo sapiens (Human)).